The primary structure comprises 164 residues: Ubiquitin-conjugating enzyme E2 2 (164 aa).

One can recognise a UBC core domain in the interval 4 to 150; that stretch reads PARRRLMRDF…VKETVEKSWE (147 aa). Catalysis depends on Cys88, which acts as the Glycyl thioester intermediate.

It belongs to the ubiquitin-conjugating enzyme family.

Its subcellular location is the cytoplasm. The protein localises to the nucleus. The enzyme catalyses S-ubiquitinyl-[E1 ubiquitin-activating enzyme]-L-cysteine + [E2 ubiquitin-conjugating enzyme]-L-cysteine = [E1 ubiquitin-activating enzyme]-L-cysteine + S-ubiquitinyl-[E2 ubiquitin-conjugating enzyme]-L-cysteine.. It functions in the pathway protein modification; protein ubiquitination. Its function is as follows. Catalyzes the covalent attachment of ubiquitin to other proteins. Plays a role in transcription regulation by catalyzing the monoubiquitination of histone H2B to form H2BK123ub1. H2BK123ub1 gives a specific tag for epigenetic transcriptional activation and is also a prerequisite for H3K4me and H3K79me formation. Also involved in postreplication repair of UV-damaged DNA, in N-end rule-dependent protein degradation and in sporulation. This is Ubiquitin-conjugating enzyme E2 2 (UBC2) from Kluyveromyces lactis (strain ATCC 8585 / CBS 2359 / DSM 70799 / NBRC 1267 / NRRL Y-1140 / WM37) (Yeast).